Consider the following 212-residue polypeptide: Regulatory protein RecX (212 aa).

The protein belongs to the RecX family.

Its subcellular location is the cytoplasm. Modulates RecA activity. In Clostridium botulinum (strain Alaska E43 / Type E3), this protein is Regulatory protein RecX.